A 581-amino-acid chain; its full sequence is Arginine--tRNA ligase (581 aa).

The short motif at 126–136 (PNLAKEMHVGH) is the 'HIGH' region element.

It belongs to the class-I aminoacyl-tRNA synthetase family. In terms of assembly, monomer.

The protein resides in the cytoplasm. The enzyme catalyses tRNA(Arg) + L-arginine + ATP = L-arginyl-tRNA(Arg) + AMP + diphosphate. This Shewanella sediminis (strain HAW-EB3) protein is Arginine--tRNA ligase.